We begin with the raw amino-acid sequence, 468 residues long: MVRWKKPKRFLCRKTQDYERIDDIENNDEDSDDDVILEINHDGEHEDNYRNPMIRMAYIPIVIIAVIYSSFIFFFALFIEASAHTNSKCSEAHEKEKMSSGLLTPPMKHILEDRTKYKNEIKLLKTFNVHLTYSTWINSILEILALIYSFLLLLVDRQYLYPLSQVILYLFTRINFVYTDIYGRFFSPSDVVGAITTEVIYDLIRWQSESKLFKVFPFTPCPLPLLLFPIFLSILQVFANQKHTHVYETVLLIFFRIMTRFAGRRPFILSYQVLRSGIASFQSATSHDIAKTLNKVTHCCLNVFASSAFFVLLMVLVDKQGLDKTPKCLAALYAFAMWMQLATVRYRHFIPLILTVVIELVITGLVSYQTGEFIFSHTAEVKDYVFTVMFTIIAVFRFVFIIILFKVLIYKNPPHSLTTTVLLKPTNIPVTFSSIKAPQELDPTNPYYPQTVYNSNQSKNNLLPLTRD.

6 consecutive transmembrane segments (helical) span residues 59–79 (IPIV…ALFI), 135–155 (TWIN…LLLV), 215–235 (VFPF…LSIL), 297–317 (THCC…MVLV), 348–368 (HFIP…LVSY), and 385–405 (VFTV…IILF).

The protein resides in the membrane. This is an uncharacterized protein from Caenorhabditis elegans.